The following is a 719-amino-acid chain: Developmental regulator flbA (719 aa).

Polar residues predominate over residues 1 to 17 (MPTSISTAPLSQGSPPS). Disordered regions lie at residues 1-39 (MPTS…STAA), 117-141 (IGST…SRKA), and 155-190 (LSPP…AAER). Composition is skewed to low complexity over residues 123-135 (SSLR…GSLQ) and 158-171 (PLSD…QSSS). A fungal-DR region spans residues 214–411 (QTSSRLLRMT…QDGPNVKSSV (198 aa)). Residues 425–511 (GLVGVKMARE…SKNAIYAITE (87 aa)) form the DEP domain. The region spanning 540–685 (SNNARLNHIL…FLRDPKYSAI (146 aa)) is the RGS domain. The tract at residues 694 to 719 (LIGGGRSYSPTPGNVPERSMSRSQRS) is disordered.

Functionally, required for asexual sporulation and normal colony development. May be involved in brlA activation. Could play a regulatory role in controlling the flug-initiated signal transduction pathway that triggers the asexual reproduction. In Emericella nidulans (strain FGSC A4 / ATCC 38163 / CBS 112.46 / NRRL 194 / M139) (Aspergillus nidulans), this protein is Developmental regulator flbA (flbA).